The following is a 242-amino-acid chain: uncharacterized protein (242 aa).

The N-terminal stretch at 1–20 (MTFIKGLPLMLLTISLGCNA) is a signal peptide.

Belongs to the periplasmic pilus chaperone family.

It localises to the periplasm. Its function is as follows. Could be required for the biogenesis of the putative YbgD fimbria. This is an uncharacterized protein from Escherichia coli (strain K12).